Reading from the N-terminus, the 357-residue chain is DNA replication and repair protein RecF (357 aa).

An ATP-binding site is contributed by 30 to 37; it reads GANGSGKT.

It belongs to the RecF family.

The protein localises to the cytoplasm. The RecF protein is involved in DNA metabolism; it is required for DNA replication and normal SOS inducibility. RecF binds preferentially to single-stranded, linear DNA. It also seems to bind ATP. This chain is DNA replication and repair protein RecF, found in Cronobacter sakazakii (strain ATCC BAA-894) (Enterobacter sakazakii).